We begin with the raw amino-acid sequence, 421 residues long: Gamma-glutamyl phosphate reductase (421 aa).

This sequence belongs to the gamma-glutamyl phosphate reductase family.

It localises to the cytoplasm. The enzyme catalyses L-glutamate 5-semialdehyde + phosphate + NADP(+) = L-glutamyl 5-phosphate + NADPH + H(+). It participates in amino-acid biosynthesis; L-proline biosynthesis; L-glutamate 5-semialdehyde from L-glutamate: step 2/2. In terms of biological role, catalyzes the NADPH-dependent reduction of L-glutamate 5-phosphate into L-glutamate 5-semialdehyde and phosphate. The product spontaneously undergoes cyclization to form 1-pyrroline-5-carboxylate. In Erythrobacter litoralis (strain HTCC2594), this protein is Gamma-glutamyl phosphate reductase.